The chain runs to 530 residues: Glucose-6-phosphate isomerase (530 aa).

Catalysis depends on E335, which acts as the Proton donor. Active-site residues include H366 and K495.

This sequence belongs to the GPI family.

Its subcellular location is the cytoplasm. The enzyme catalyses alpha-D-glucose 6-phosphate = beta-D-fructose 6-phosphate. It functions in the pathway carbohydrate biosynthesis; gluconeogenesis. It participates in carbohydrate degradation; glycolysis; D-glyceraldehyde 3-phosphate and glycerone phosphate from D-glucose: step 2/4. In terms of biological role, catalyzes the reversible isomerization of glucose-6-phosphate to fructose-6-phosphate. The chain is Glucose-6-phosphate isomerase from Roseobacter denitrificans (strain ATCC 33942 / OCh 114) (Erythrobacter sp. (strain OCh 114)).